The chain runs to 311 residues: Ribose-5-phosphate isomerase (311 aa).

Residues 22-32 (AGGAASGGGGN) show a composition bias toward gly residues. A disordered region spans residues 22–67 (AGGAASGGGGNSWDLPGSHVRLPGRAQSGTRGGAGNTSTSCGDSNS). The residue at position 52 (Arg52) is an Omega-N-methylarginine. Residues 57 to 67 (NTSTSCGDSNS) are compositionally biased toward polar residues. At Ser106 the chain carries Phosphoserine.

It belongs to the ribose 5-phosphate isomerase family.

The catalysed reaction is aldehydo-D-ribose 5-phosphate = D-ribulose 5-phosphate. Its pathway is carbohydrate degradation; pentose phosphate pathway; D-ribose 5-phosphate from D-ribulose 5-phosphate (non-oxidative stage): step 1/1. In terms of biological role, catalyzes the reversible conversion of ribose-5-phosphate to ribulose 5-phosphate and participates in the first step of the non-oxidative branch of the pentose phosphate pathway. The sequence is that of Ribose-5-phosphate isomerase from Homo sapiens (Human).